A 759-amino-acid polypeptide reads, in one-letter code: MADEGPRKGSVSALMGRTNGLTKPAALAGGPAKPGGTGGSRKLVIKNFRDRPRLPDNYTQDTWRKLHEAVKAIQSSTSIRYNLEELYQAVENLCSHKVSPTLYKQLRQVCEDHVQAQILPFREDSLDSVLFLKKINTCWQDHCRQMIMIRSIFLFLDRTYVLQNSMLPSIWDMGLELFRNHIISDRMVQSKTIDGILLLIGRERSGEAVDRSLLRSLLSMLSDLQVYKDSFELKFLEETNCLYAAEGQRLMQDREVPEYLNHVSKRLEEEADRVITYLDHSTQKPLIACVEKQLLGEHLTAILQKGLEHLLDENRVPDLTQMYQLFSRVKGGQHALLQHWSEYIKTFGTTIVINPEKDKDMVQDLLDFKDKVDHVVEVCFQRNERFINLMKESFETFINKRPNKPAELIAKHVDSKLRAGNKEATDEELERILDKIMILFRFIHGKDVFEAFYKKDLAKRLLVGKSASVDAEKSMLSKLKHECGAAFTSKLEGMFKDMELSKDIMVHFKQHMQNQSAPGPIDLTVNILTMGYWPTYTPMEVHLPPEMVRLQEVFKTFYLGKHSGRKLQWQTTLGHAVLKADFKEGKKEFQVSLFQTLVLLMFNEGDGFSFEEIKMATGIEDSELRRTLQSLACGKARVLIKSPKGKEVEDGDKFIFNADFKHKLFRIKINQIQMKETVEEQVSTTERVFQDRQYQIDAAIVRIMKMRKTLGHNLLVSELYNQLKFPVKPGDLKKRIESLIDRDYMERDKDSPNQYHYVA.

The disordered stretch occupies residues 1 to 40 (MADEGPRKGSVSALMGRTNGLTKPAALAGGPAKPGGTGGS). Lys-8 is covalently cross-linked (Glycyl lysine isopeptide (Lys-Gly) (interchain with G-Cter in SUMO2)). Residue Ser-10 is modified to Phosphoserine. Positions 20–31 (GLTKPAALAGGP) are enriched in low complexity. Lys-33 participates in a covalent cross-link: Glycyl lysine isopeptide (Lys-Gly) (interchain with G-Cter in ubiquitin). The Cullin neddylation domain occupies 691 to 750 (DRQYQIDAAIVRIMKMRKTLGHNLLVSELYNQLKFPVKPGDLKKRIESLIDRDYMERDKD). Lys-705 is covalently cross-linked (Glycyl lysine isopeptide (Lys-Gly) (interchain with G-Cter in NEDD8)).

The protein belongs to the cullin family. Can self-associate. Component of multiple DCX (DDB1-CUL4-X-box) E3 ubiquitin-protein ligase complexes that seem to consist of DDB1, CUL4A or CUL4B, RBX1 and a variable substrate recognition component which seems to belong to a protein family described as DCAF (Ddb1- and Cul4-associated factor) or CDW (CUL4-DDB1-associated WD40-repeat) proteins. Component of the CSA complex (DCX(ERCC8) complex) containing ERCC8, RBX1, DDB1 and CUL4A; the CSA complex interacts with RNA polymerase II; upon UV irradiation it interacts with the COP9 signalosome and preferentially with the hyperphosphorylated form of RNA polymerase II. Component of the DCX(DET1-COP1) complex with the substrate recognition component DET1 and COP1. Component of the DCX(DDB2) complex with the substrate recognition component DDB2. Component of the DCX(DTL) complex with the putative substrate recognition component DTL. Component of DCX complexes part of the DesCEND (destruction via C-end degrons) pathway, which contain either TRPC4AP or DCAF12 as substrate-recognition component. Component of the DCX(AMBRA1) complex with the substrate recognition component AMBRA1. Interacts with DDB1, RBX1, RNF7, CDT1, TIP120A/CAND1, SKP2, CDKN1B, MDM2, TP53 and HOXA9. Interacts with DDB2; the interactions with DDB2 and CAND1 are mutually exclusive. Interacts with DCAF1, DTL, DDA1, DCAF6, DCAF4, DCAF16, DCAF17, DET1, WDTC1, DCAF5, DCAF11, WDR24A, COP1, PAFAH1B1, ERCC8, GRWD1, FBXW5, RBBP7, GNB2, WSB1, WSB2, NUP43, PWP1, FBXW8, ATG16L1, KATNB1, RBBP4, RBBP5, LRWD1 and DCAF8. May interact with WDR26, WDR51B, SNRNP40, WDR61, WDR76, WDR5. Interacts (when neddylated) with ARIH1; leading to activate the E3 ligase activity of ARIH1. The DDB1-CUL4A complex interacts with CRY1. Interacts (unneddylated form) with DCUN1D1, DCUN1D2, DCUN1D3, DCUN1D4 and DCUN1D5; these interactions promote the cullin neddylation. As to quaternary structure, (Microbial infection) Interacts with murine cytomegalovirus M48. Neddylated; required for activity of cullin-RING-based E3 ubiquitin-protein ligase complexes. Deneddylated via its interaction with the COP9 signalosome (CSN) complex. In terms of processing, (Microbial infection) Deneddylated by murine cytomegalovirus M48 leading to a S-phase-like environment that is required for efficient replication of the viral genome. As to expression, expressed in oocytes (at protein level). In the ovary, also expressed in cumulus cells. Expressed in testis, spleen and kidney.

It functions in the pathway protein modification; protein ubiquitination. Its function is as follows. Core component of multiple cullin-RING-based E3 ubiquitin-protein ligase complexes which mediate the ubiquitination of target proteins. As a scaffold protein may contribute to catalysis through positioning of the substrate and the ubiquitin-conjugating enzyme. The E3 ubiquitin-protein ligase activity of the complex is dependent on the neddylation of the cullin subunit and is inhibited by the association of the deneddylated cullin subunit with TIP120A/CAND1. The functional specificity of the E3 ubiquitin-protein ligase complex depends on the variable substrate recognition component. DCX(DET1-COP1) directs ubiquitination of JUN. DCX(DDB2) directs ubiquitination of XPC. DCX(DDB2) ubiquitinates histones H3-H4 and is required for efficient histone deposition during replication-coupled (H3.1) and replication-independent (H3.3) nucleosome assembly, probably by facilitating the transfer of H3 from ASF1A/ASF1B to other chaperones involved in histone deposition. DCX(DTL) plays a role in PCNA-dependent polyubiquitination of CDT1 and MDM2-dependent ubiquitination of p53/TP53 in response to radiation-induced DNA damage and during DNA replication. DCX(DTL) directs autoubiquitination of DTL. In association with DDB1 and SKP2 probably is involved in ubiquitination of CDKN1B/p27kip. Is involved in ubiquitination of HOXA9. The DDB1-CUL4A-DTL E3 ligase complex regulates the circadian clock function by mediating the ubiquitination and degradation of CRY1. The DCX(ERCC8) complex (also named CSA complex) plays a role in transcription-coupled repair (TCR). A number of DCX complexes (containing either TRPC4AP or DCAF12 as substrate-recognition component) are part of the DesCEND (destruction via C-end degrons) pathway, which recognizes a C-degron located at the extreme C terminus of target proteins, leading to their ubiquitination and degradation. With CUL4B, contributes to ribosome biogenesis. The DCX(AMBRA1) complex is a master regulator of the transition from G1 to S cell phase by mediating ubiquitination of phosphorylated cyclin-D (CCND1, CCND2 and CCND3). The DCX(AMBRA1) complex also acts as a regulator of Cul5-RING (CRL5) E3 ubiquitin-protein ligase complexes by mediating ubiquitination and degradation of Elongin-C (ELOC) component of CRL5 complexes. This Mus musculus (Mouse) protein is Cullin-4A.